A 328-amino-acid chain; its full sequence is GMP reductase (328 aa).

Catalysis depends on C176, which acts as the Thioimidate intermediate. Position 205–228 (205–228 (IIADGGIRTHGDIAKSIRFGASMV)) interacts with NADP(+).

The protein belongs to the IMPDH/GMPR family. GuaC type 2 subfamily.

It catalyses the reaction IMP + NH4(+) + NADP(+) = GMP + NADPH + 2 H(+). Its function is as follows. Catalyzes the irreversible NADPH-dependent deamination of GMP to IMP. It functions in the conversion of nucleobase, nucleoside and nucleotide derivatives of G to A nucleotides, and in maintaining the intracellular balance of A and G nucleotides. This chain is GMP reductase, found in Streptococcus pneumoniae (strain Hungary19A-6).